We begin with the raw amino-acid sequence, 606 residues long: Vitamin B12 transporter BtuB (606 aa).

A signal peptide spans 1 to 22 (MQKSLLAIAMASLLTPVSYLHA). The TonB box motif lies at 29 to 36 (DTVVVTAN). The region spanning 41–153 (PLAEVIASTT…IAGVINVITT (113 aa)) is the TBDR plug domain. The TBDR beta-barrel domain occupies 158–606 (SEGSVVSLGA…RYFANLTYQF (449 aa)). Positions 589-606 (LSYNAPERRYFANLTYQF) match the TonB C-terminal box motif.

It belongs to the TonB-dependent receptor family. BtuB (TC 1.B.14.3.1) subfamily.

The protein resides in the cell outer membrane. Involved in the active translocation of vitamin B12 (cyanocobalamin) across the outer membrane to the periplasmic space. It derives its energy for transport by interacting with the trans-periplasmic membrane protein TonB. The protein is Vitamin B12 transporter BtuB of Vibrio vulnificus (strain CMCP6).